Consider the following 63-residue polypeptide: Large ribosomal subunit protein uL30 (63 aa).

The protein belongs to the universal ribosomal protein uL30 family. In terms of assembly, part of the 50S ribosomal subunit.

This is Large ribosomal subunit protein uL30 from Methylobacterium sp. (strain 4-46).